The chain runs to 393 residues: NAD(P)H-quinone oxidoreductase subunit H, chloroplastic (393 aa).

It belongs to the complex I 49 kDa subunit family. NDH is composed of at least 16 different subunits, 5 of which are encoded in the nucleus.

The protein resides in the plastid. It is found in the chloroplast thylakoid membrane. The catalysed reaction is a plastoquinone + NADH + (n+1) H(+)(in) = a plastoquinol + NAD(+) + n H(+)(out). It catalyses the reaction a plastoquinone + NADPH + (n+1) H(+)(in) = a plastoquinol + NADP(+) + n H(+)(out). Its function is as follows. NDH shuttles electrons from NAD(P)H:plastoquinone, via FMN and iron-sulfur (Fe-S) centers, to quinones in the photosynthetic chain and possibly in a chloroplast respiratory chain. The immediate electron acceptor for the enzyme in this species is believed to be plastoquinone. Couples the redox reaction to proton translocation, and thus conserves the redox energy in a proton gradient. In Pelargonium hortorum (Common geranium), this protein is NAD(P)H-quinone oxidoreductase subunit H, chloroplastic.